The sequence spans 635 residues: Protein NSP-INTERACTING KINASE 2 (635 aa).

The signal sequence occupies residues 1–32 (MLQGRREAKKSYALFSSTFFFFFICFLSSSSA). The Extracellular portion of the chain corresponds to 33-248 (ELTDKGVNFE…DGGTKNRKIA (216 aa)). Asparagine 92 and asparagine 103 each carry an N-linked (GlcNAc...) asparagine glycan. LRR repeat units lie at residues 104 to 128 (LTNL…IGKL), 129 to 153 (MKLK…SYSK), 155 to 176 (LQYL…LANM), and 177 to 200 (TQLT…LAKT). Residues asparagine 140, asparagine 162, asparagine 175, asparagine 188, asparagine 219, asparagine 231, and asparagine 235 are each glycosylated (N-linked (GlcNAc...) asparagine). The interval 214-242 (TEKDCNGTQPKPMSITLNSSQNKSSDGGT) is disordered. The segment covering 219-241 (NGTQPKPMSITLNSSQNKSSDGG) has biased composition (polar residues). The helical transmembrane segment at 249–269 (VVFGVSLTCVCLLIIGFGFLL) threads the bilayer. Residues 270-635 (WWRRRHNKQV…VQAMELSGPR (366 aa)) lie on the Cytoplasmic side of the membrane. At threonine 309 the chain carries Phosphothreonine. The Protein kinase domain occupies 312-591 (FSSKNLVGKG…EGDGLVEKWE (280 aa)). Residues 318–326 (VGKGGFGNV) and lysine 340 each bind ATP. Residues serine 393 and serine 396 each carry the phosphoserine modification. Position 408 is a phosphothreonine (threonine 408). The interaction with geminivirus NSP protein stretch occupies residues 422–502 (YLHEQCDPKI…DVFGFGILLL (81 aa)). The active-site Proton acceptor is the aspartate 435. Residues threonine 468, threonine 469, and threonine 474 each carry the phosphothreonine modification. At tyrosine 482 the chain carries Phosphotyrosine. Serine 484 bears the Phosphoserine mark. Residue threonine 485 is modified to Phosphothreonine. Phosphoserine is present on serine 489. A Phosphothreonine modification is found at threonine 564. Positions 593-613 (SSQRAETNRSYSKPNEFSSSE) are enriched in polar residues. The disordered stretch occupies residues 593-621 (SSQRAETNRSYSKPNEFSSSERYSDLTDD).

The protein belongs to the protein kinase superfamily. Ser/Thr protein kinase family. As to quaternary structure, oligomer. Interacts with geminivirus nuclear shuttle protein (NSP). Post-translationally, autophosphorylated. As to expression, expressed in flowers and roots.

The protein resides in the cell membrane. The catalysed reaction is L-seryl-[protein] + ATP = O-phospho-L-seryl-[protein] + ADP + H(+). The enzyme catalyses L-threonyl-[protein] + ATP = O-phospho-L-threonyl-[protein] + ADP + H(+). Inhibited by the viral nuclear shuttle protein (NSP) that binds to the region required for oligomerization. In terms of biological role, involved in defense response to geminivirus infection. Phosphorylates RPL10A in vitro. The protein is Protein NSP-INTERACTING KINASE 2 (NIK2) of Arabidopsis thaliana (Mouse-ear cress).